The primary structure comprises 418 residues: NADH-quinone oxidoreductase subunit D (418 aa).

This sequence belongs to the complex I 49 kDa subunit family. NDH-1 is composed of 14 different subunits. Subunits NuoB, C, D, E, F, and G constitute the peripheral sector of the complex.

It localises to the cell inner membrane. It carries out the reaction a quinone + NADH + 5 H(+)(in) = a quinol + NAD(+) + 4 H(+)(out). NDH-1 shuttles electrons from NADH, via FMN and iron-sulfur (Fe-S) centers, to quinones in the respiratory chain. The immediate electron acceptor for the enzyme in this species is believed to be ubiquinone. Couples the redox reaction to proton translocation (for every two electrons transferred, four hydrogen ions are translocated across the cytoplasmic membrane), and thus conserves the redox energy in a proton gradient. The polypeptide is NADH-quinone oxidoreductase subunit D (Neisseria meningitidis serogroup A / serotype 4A (strain DSM 15465 / Z2491)).